The sequence spans 372 residues: Ligninase LG3 (372 aa).

The N-terminal stretch at 1 to 21 (MAFKQLFAAISLALSLSAANA) is a signal peptide. A propeptide spanning residues 22–28 (AAVIEKR) is cleaved from the precursor. Intrachain disulfides connect cysteine 31/cysteine 43 and cysteine 62/cysteine 148. The active-site Proton acceptor is histidine 75. 4 residues coordinate Ca(2+): aspartate 76, glycine 94, aspartate 96, and serine 98. Histidine 204 provides a ligand contact to heme b. The Ca(2+) site is built by serine 205, aspartate 222, threonine 224, isoleucine 227, and aspartate 229. A disulfide bridge connects residues cysteine 277 and cysteine 345. Asparagine 285 carries an N-linked (GlcNAc...) asparagine glycan. A compositionally biased stretch (low complexity) spans 350-361 (FPTLTTLPGPET). Positions 350-372 (FPTLTTLPGPETSVQRIPPPPGA) are disordered.

This sequence belongs to the peroxidase family. Ligninase subfamily. It depends on heme b as a cofactor. Ca(2+) is required as a cofactor.

It carries out the reaction 1-(3,4-dimethoxyphenyl)-2-(2-methoxyphenoxy)propane-1,3-diol + H2O2 = 3,4-dimethoxybenzaldehyde + guaiacol + glycolaldehyde + H2O. The catalysed reaction is 2 (3,4-dimethoxyphenyl)methanol + H2O2 = 2 (3,4-dimethoxyphenyl)methanol radical + 2 H2O. Its pathway is secondary metabolite metabolism; lignin degradation. Depolymerization of lignin. Catalyzes the C(alpha)-C(beta) cleavage of the propyl side chains of lignin. The protein is Ligninase LG3 (GLG3) of Phanerodontia chrysosporium (White-rot fungus).